We begin with the raw amino-acid sequence, 180 residues long: Large ribosomal subunit protein uL5 (180 aa).

The protein belongs to the universal ribosomal protein uL5 family. Part of the 50S ribosomal subunit; part of the 5S rRNA/L5/L18/L25 subcomplex. Contacts the 5S rRNA and the P site tRNA. Forms a bridge to the 30S subunit in the 70S ribosome.

In terms of biological role, this is one of the proteins that bind and probably mediate the attachment of the 5S RNA into the large ribosomal subunit, where it forms part of the central protuberance. In the 70S ribosome it contacts protein S13 of the 30S subunit (bridge B1b), connecting the 2 subunits; this bridge is implicated in subunit movement. Contacts the P site tRNA; the 5S rRNA and some of its associated proteins might help stabilize positioning of ribosome-bound tRNAs. This Streptococcus uberis (strain ATCC BAA-854 / 0140J) protein is Large ribosomal subunit protein uL5.